A 526-amino-acid chain; its full sequence is Probable metalloreductase AIM14 (526 aa).

7 consecutive transmembrane segments (helical) span residues 17–37, 60–80, 96–113, 138–158, 172–192, 199–219, and 221–241; these read IPYG…LGVL, LYLV…LLPF, RLGR…LLNL, CIII…ALGE, LAGV…IGPM, AFYV…AFHA, and PSVT…QGFA. The region spanning 97-214 is the Ferric oxidoreductase domain; it reads LGRLSYALLP…NLTGISFIFV (118 aa). Positions 238–370 constitute an FAD-binding FR-type domain; the sequence is QGFAKFYYAK…GGSGISFGLP (133 aa).

This sequence belongs to the ferric reductase (FRE) family. AIM14 subfamily.

It is found in the membrane. Probable cell surface metalloreductase. May be involved in iron or copper homeostasis. This Zygosaccharomyces rouxii (strain ATCC 2623 / CBS 732 / NBRC 1130 / NCYC 568 / NRRL Y-229) protein is Probable metalloreductase AIM14 (AIM14).